The primary structure comprises 239 residues: Sugar fermentation stimulation protein homolog (239 aa).

This sequence belongs to the SfsA family.

In Alcanivorax borkumensis (strain ATCC 700651 / DSM 11573 / NCIMB 13689 / SK2), this protein is Sugar fermentation stimulation protein homolog.